Reading from the N-terminus, the 108-residue chain is Somatoliberin (108 aa).

The signal sequence occupies residues 1-20; that stretch reads MPLWVFFFVILTLSNSSHCS. Residues 21–31 constitute a propeptide that is removed on maturation; it reads PPPPLTLRMRR. Position 75 is a leucine amide (leucine 75). The propeptide occupies 78 to 108; sequence QVDSMWAEQKQMELESILVALLQKHSRNSQG.

Belongs to the glucagon family.

It is found in the secreted. In terms of biological role, GRF is released by the hypothalamus and acts on the adenohypophyse to stimulate the secretion of growth hormone. This chain is Somatoliberin (GHRH), found in Homo sapiens (Human).